The chain runs to 451 residues: Phosphoglucosamine mutase (451 aa).

S102 acts as the Phosphoserine intermediate in catalysis. Mg(2+)-binding residues include S102, D243, D245, and D247. At S102 the chain carries Phosphoserine.

The protein belongs to the phosphohexose mutase family. Mg(2+) is required as a cofactor. In terms of processing, activated by phosphorylation.

It carries out the reaction alpha-D-glucosamine 1-phosphate = D-glucosamine 6-phosphate. Functionally, catalyzes the conversion of glucosamine-6-phosphate to glucosamine-1-phosphate. The polypeptide is Phosphoglucosamine mutase (Brucella abortus (strain 2308)).